A 121-amino-acid chain; its full sequence is MSRVKGGTVTHARHKKVIKAAKGYYGRRKNTFKVARQAVDKANQYATRDRKNRKRNFRALWIQRINAAVRSHDEALTYSRFINGLNLAGIEVDRKVLADLAVHEPEAFGAIVRQAQDALAA.

This sequence belongs to the bacterial ribosomal protein bL20 family.

Functionally, binds directly to 23S ribosomal RNA and is necessary for the in vitro assembly process of the 50S ribosomal subunit. It is not involved in the protein synthesizing functions of that subunit. This Ruegeria sp. (strain TM1040) (Silicibacter sp.) protein is Large ribosomal subunit protein bL20.